The sequence spans 328 residues: Gonadotropin-releasing hormone receptor (328 aa).

The Extracellular segment spans residues 1–38 (MANSDSPEQNENHCSSINSSIPLTPGSLPTLTLSGKIR). An N-linked (GlcNAc...) asparagine glycan is attached at Asn-18. A helical transmembrane segment spans residues 39–58 (VTVTFFLFLLSTIFNTSFLL). Topologically, residues 59 to 77 (KLQNWTQRKEKRKKLSRMK) are cytoplasmic. A helical transmembrane segment spans residues 78 to 97 (LLLKHLTLANLLETLIVMPL). At 98–115 (DGMWNITVQWYAGELLCK) the chain is on the extracellular side. A glycan (N-linked (GlcNAc...) asparagine) is linked at Asn-102. A disulfide bridge links Cys-114 with Cys-196. Residues 116–137 (VLSYLKLFSMYAPAFMMVVISL) form a helical membrane-spanning segment. Topologically, residues 138-164 (DRSLAITKPLAVKSNSKLGQFMIGLAW) are cytoplasmic. The helical transmembrane segment at 165–184 (LLSSIFAGPQLYIFGMIHLA) threads the bilayer. Residues 185 to 212 (DDSGQTEGFSQCVTHCSFPQWWHQAFYN) are Extracellular-facing. Residues 213–232 (FFTFSCLFIIPLLIMVICNA) traverse the membrane as a helical segment. At 233 to 281 (KIIFTLTRVLHQDPHKLQLNQSKNNIPRARLRTLKMTVAFATSFTVCWT) the chain is on the cytoplasmic side. The helical transmembrane segment at 282–300 (PYYVLGIWYWFDPDMVNRV) threads the bilayer. Topologically, residues 301–306 (SDPVNH) are extracellular. Residues 307–326 (FFFLFAFLNPCFNPLIYGYF) form a helical membrane-spanning segment. The Cytoplasmic segment spans residues 327-328 (SL).

Belongs to the G-protein coupled receptor 1 family.

It localises to the cell membrane. In terms of biological role, receptor for gonadotropin releasing hormone (GnRH) that mediates the action of GnRH to stimulate the secretion of the gonadotropic hormones luteinizing hormone (LH) and follicle-stimulating hormone (FSH). This receptor mediates its action by association with G-proteins that activate a phosphatidylinositol-calcium second messenger system. This chain is Gonadotropin-releasing hormone receptor (GNRHR), found in Bos mutus grunniens (Wild yak).